Here is a 324-residue protein sequence, read N- to C-terminus: dITP/XTP pyrophosphatase (324 aa).

Residues 1 to 127 are unknown; the sequence is MTKTIFESKT…KNDNNFGDTI (127 aa). The interval 128–324 is NTP pyrophosphatase; sequence LIATHNEGKT…EVFPKWQLEN (197 aa). 131 to 136 provides a ligand contact to substrate; that stretch reads THNEGK. The Mg(2+) site is built by Glu-164 and Asp-193. Asp-193 (proton acceptor) is an active-site residue. Residues Ser-194, 277-280, Lys-300, and 305-306 each bind substrate; these read FGYD and HR.

Belongs to the HAM1 NTPase family. Homodimer. Mg(2+) is required as a cofactor.

The catalysed reaction is XTP + H2O = XMP + diphosphate + H(+). It carries out the reaction dITP + H2O = dIMP + diphosphate + H(+). The enzyme catalyses ITP + H2O = IMP + diphosphate + H(+). Functionally, pyrophosphatase that catalyzes the hydrolysis of nucleoside triphosphates to their monophosphate derivatives, with a high preference for the non-canonical purine nucleotides XTP (xanthosine triphosphate), dITP (deoxyinosine triphosphate) and ITP. Seems to function as a house-cleaning enzyme that removes non-canonical purine nucleotides from the nucleotide pool, thus preventing their incorporation into DNA/RNA and avoiding chromosomal lesions. The polypeptide is dITP/XTP pyrophosphatase (Streptococcus agalactiae serotype III (strain NEM316)).